A 432-amino-acid chain; its full sequence is uncharacterized protein (432 aa).

The span at 1-14 (MSDTTDVPENQKSP) shows a compositional bias: polar residues. The segment at 1–42 (MSDTTDVPENQKSPKPSGKADKRKIEEKPENSSLKRKKFEDP) is disordered. The span at 18 to 30 (GKADKRKIEEKPE) shows a compositional bias: basic and acidic residues. The region spanning 85-148 (RKMVEVFSGE…HEHPIRDLPI (64 aa)) is the S4 RNA-binding domain. D199 is an active-site residue.

The protein belongs to the pseudouridine synthase RluA family.

This is an uncharacterized protein from Caenorhabditis elegans.